The primary structure comprises 509 residues: Taxoid 14-beta-hydroxylase (509 aa).

3 consecutive transmembrane segments (helical) span residues 20–40 (AILF…LLFL), 186–206 (SVVA…FFNI), and 218–238 (LLEI…GFAY). Cysteine 443 provides a ligand contact to heme.

This sequence belongs to the cytochrome P450 family.

It localises to the microsome membrane. The catalysed reaction is 10beta-hydroxytaxa-4(20),11-dien-5alpha-yl acetate + NADPH + O2 + H(+) = 10beta,14beta-dihydroxytaxa-4(20),11-dien-5alpha-yl acetate + NADP(+) + H2O. It participates in alkaloid biosynthesis; taxol biosynthesis. Its function is as follows. Catalyzes the conversion of 5-alpha-acetoxy-10beta-ol to 5-alpha-acetoxy-10beta,14beta-dihydroxy taxadiene. Also acts on taxa-4(20),11-dien-5-alpha-yl acetate. The chain is Taxoid 14-beta-hydroxylase from Taxus cuspidata (Japanese yew).